Reading from the N-terminus, the 102-residue chain is Small ribosomal subunit protein uS10 (102 aa).

The protein belongs to the universal ribosomal protein uS10 family. As to quaternary structure, part of the 30S ribosomal subunit.

Functionally, involved in the binding of tRNA to the ribosomes. The chain is Small ribosomal subunit protein uS10 from Limosilactobacillus reuteri (strain DSM 20016) (Lactobacillus reuteri).